A 322-amino-acid chain; its full sequence is Glycerol-3-phosphate dehydrogenase [NAD(P)+] (322 aa).

The NADPH site is built by Trp13, His33, and Lys99. Lys99, Gly127, and Ser129 together coordinate sn-glycerol 3-phosphate. Ala131 is a binding site for NADPH. 5 residues coordinate sn-glycerol 3-phosphate: Lys182, Asp235, Ser245, Arg246, and Asn247. The active-site Proton acceptor is Lys182. Arg246 is an NADPH binding site. Glu272 lines the NADPH pocket.

This sequence belongs to the NAD-dependent glycerol-3-phosphate dehydrogenase family.

The protein resides in the cytoplasm. It carries out the reaction sn-glycerol 3-phosphate + NAD(+) = dihydroxyacetone phosphate + NADH + H(+). The catalysed reaction is sn-glycerol 3-phosphate + NADP(+) = dihydroxyacetone phosphate + NADPH + H(+). It participates in membrane lipid metabolism; glycerophospholipid metabolism. Functionally, catalyzes the reduction of the glycolytic intermediate dihydroxyacetone phosphate (DHAP) to sn-glycerol 3-phosphate (G3P), the key precursor for phospholipid synthesis. The protein is Glycerol-3-phosphate dehydrogenase [NAD(P)+] of Ruthia magnifica subsp. Calyptogena magnifica.